A 129-amino-acid chain; its full sequence is Cytochrome c-type protein SHP (129 aa).

An N-terminal signal peptide occupies residues 1–17 (MTRFLILSAVLAGPALA). Positions 60, 63, and 64 each coordinate heme c. Cysteine 106 and cysteine 114 form a disulfide bridge.

Post-translationally, binds 1 heme c group covalently per subunit.

High-spin cytochrome. Transiently bind oxygen during autoxidation, which occurs with a half-life of 3 minutes with a 4-fold excess of O(2). Also binds carbon monoxide, azide and cyanide. In Cereibacter sphaeroides (strain ATCC 17023 / DSM 158 / JCM 6121 / CCUG 31486 / LMG 2827 / NBRC 12203 / NCIMB 8253 / ATH 2.4.1.) (Rhodobacter sphaeroides), this protein is Cytochrome c-type protein SHP (shp).